The sequence spans 111 residues: MTAAQFTNVTVNAQATISYDGRCSSHTIMFEDGRHKTLGVILPCDNLVEHYHFSTNTSERIEITGGECEVKINGEEAFSYYRAGQSFVVEGNSGFNLRTEEIVQYICHLEG.

This sequence belongs to the nucleoside phosphorylase PpnP family.

The catalysed reaction is a purine D-ribonucleoside + phosphate = a purine nucleobase + alpha-D-ribose 1-phosphate. The enzyme catalyses adenosine + phosphate = alpha-D-ribose 1-phosphate + adenine. It carries out the reaction cytidine + phosphate = cytosine + alpha-D-ribose 1-phosphate. It catalyses the reaction guanosine + phosphate = alpha-D-ribose 1-phosphate + guanine. The catalysed reaction is inosine + phosphate = alpha-D-ribose 1-phosphate + hypoxanthine. The enzyme catalyses thymidine + phosphate = 2-deoxy-alpha-D-ribose 1-phosphate + thymine. It carries out the reaction uridine + phosphate = alpha-D-ribose 1-phosphate + uracil. It catalyses the reaction xanthosine + phosphate = alpha-D-ribose 1-phosphate + xanthine. Its function is as follows. Catalyzes the phosphorolysis of diverse nucleosides, yielding D-ribose 1-phosphate and the respective free bases. Can use uridine, adenosine, guanosine, cytidine, thymidine, inosine and xanthosine as substrates. Also catalyzes the reverse reactions. This Psychrobacter arcticus (strain DSM 17307 / VKM B-2377 / 273-4) protein is Pyrimidine/purine nucleoside phosphorylase 1.